The chain runs to 89 residues: Small ribosomal subunit protein uS19 (89 aa).

Belongs to the universal ribosomal protein uS19 family.

Protein S19 forms a complex with S13 that binds strongly to the 16S ribosomal RNA. This Parabacteroides distasonis (strain ATCC 8503 / DSM 20701 / CIP 104284 / JCM 5825 / NCTC 11152) protein is Small ribosomal subunit protein uS19.